A 384-amino-acid polypeptide reads, in one-letter code: Sphingosine kinase 1 (384 aa).

In terms of domain architecture, DAGKc spans 12 to 159; the sequence is PRPCRVLVLL…MNLLSLHTAS (148 aa). Residues 22–24 and 54–58 each bind ATP; these read NPR and TERRN. 79-82 is a substrate binding site; sequence SGDG. Catalysis depends on aspartate 81, which acts as the Proton donor/acceptor. ATP-binding positions include glutamate 86 and 111–113; that span reads GSG. Short sequence motifs (nuclear export signal) lie at residues 147-155 and 161-169; these read LSPMNLLSL and LRLFSVLSL. Aspartate 178 serves as a coordination point for substrate. Positions 185 and 191 each coordinate ATP. Threonine 193 bears the Phosphothreonine mark. Serine 225 is modified (phosphoserine). 341–343 provides a ligand contact to ATP; it reads DGE.

Interacts with ACY1. Binds to calmodulin. Interacts with SPHKAP. Interacts with CIB1, the interaction occurs in a calcium-dependent manner. Interacts with TRAF2. Interacts with EEF1A1; the interaction enhances SPHK1 kinase activity. Requires Mg(2+) as cofactor. As to expression, widely expressed with highest levels in adult liver, kidney, heart and skeletal muscle. Expressed in brain cortex (at protein level).

It is found in the cytoplasm. Its subcellular location is the nucleus. It localises to the cell membrane. The protein resides in the endosome membrane. The protein localises to the membrane. It is found in the clathrin-coated pit. Its subcellular location is the synapse. The catalysed reaction is a sphingoid base + ATP = a sphingoid 1-phosphate + ADP + H(+). It catalyses the reaction L-seryl-[protein] + acetyl-CoA = O-acetyl-L-seryl-[protein] + CoA. It carries out the reaction sphinganine + ATP = sphinganine 1-phosphate + ADP + H(+). The enzyme catalyses sphing-4-enine + ATP = sphing-4-enine 1-phosphate + ADP + H(+). The catalysed reaction is 1-O-hexadecyl-2-amino-sn-glycerol + ATP = 1-O-hexadecyl-2-desoxy-2-amino-sn-glycero-3-phosphate + ADP + H(+). With respect to regulation, acetyltransferase activity increases in presence of the kinase substrate, sphingosine. In Purkinje cells, kinase activity on sphingosine increases in presence of VEGFA. In neurons, kinase activity increases during the first 24h in presence of Amyloid-beta protein 42 to decrease after 96h. Catalyzes the phosphorylation of sphingosine to form sphingosine 1-phosphate (SPP), a lipid mediator with both intra- and extracellular functions. Also acts on D-erythro-sphingosine and to a lesser extent sphinganine, but not other lipids, such as D,L-threo-dihydrosphingosine, N,N-dimethylsphingosine, diacylglycerol, ceramide, or phosphatidylinositol. In contrast to proapoptotic SPHK2, has a negative effect on intracellular ceramide levels, enhances cell growth and inhibits apoptosis. Involved in the regulation of inflammatory response and neuroinflammation. Via the product sphingosine 1-phosphate, stimulates TRAF2 E3 ubiquitin ligase activity, and promotes activation of NF-kappa-B in response to TNF signaling leading to IL17 secretion. In response to TNF and in parallel to NF-kappa-B activation, negatively regulates RANTES induction through p38 MAPK signaling pathway. Involved in endocytic membrane trafficking induced by sphingosine, recruited to dilate endosomes, also plays a role on later stages of endosomal maturation and membrane fusion independently of its kinase activity. In Purkinje cells, seems to be also involved in the regulation of autophagosome-lysosome fusion upon VEGFA. In terms of biological role, has serine acetyltransferase activity on PTGS2/COX2 in an acetyl-CoA dependent manner. The acetyltransferase activity increases in presence of the kinase substrate, sphingosine. During neuroinflammation, through PTGS2 acetylation, promotes neuronal secretion of specialized preresolving mediators (SPMs), especially 15-R-lipoxin A4, which results in an increase of phagocytic microglia. This chain is Sphingosine kinase 1, found in Homo sapiens (Human).